Reading from the N-terminus, the 144-residue chain is Snaclec 6 (144 aa).

An N-terminal signal peptide occupies residues 1 to 23; sequence MGRFISVSFGLLVVFLSLSGTGA. Disulfide bonds link C25/C36, C53/C142, and C119/C134. Residues 32-143 enclose the C-type lectin domain; the sequence is HEGHCYKVFK…CNFIAPVVCK (112 aa).

This sequence belongs to the snaclec family. As to quaternary structure, heterodimer; disulfide-linked.

It localises to the secreted. Its function is as follows. Interferes with one step of hemostasis (modulation of platelet aggregation, or coagulation cascade, for example). The chain is Snaclec 6 from Daboia siamensis (Eastern Russel's viper).